The following is a 182-amino-acid chain: A-type ATP synthase subunit E (182 aa).

The protein belongs to the V-ATPase E subunit family. As to quaternary structure, has multiple subunits with at least A(3), B(3), C, D, E, F, H, I and proteolipid K(x).

The protein resides in the cell membrane. In terms of biological role, component of the A-type ATP synthase that produces ATP from ADP in the presence of a proton gradient across the membrane. The protein is A-type ATP synthase subunit E of Picrophilus torridus (strain ATCC 700027 / DSM 9790 / JCM 10055 / NBRC 100828 / KAW 2/3).